A 330-amino-acid chain; its full sequence is ADP-L-glycero-D-manno-heptose-6-epimerase (330 aa).

Residues 11-12, 32-33, Lys-39, Lys-54, 75-79, and Asn-92 each bind NADP(+); these read FI, DN, and EGACS. The active-site Proton acceptor is Tyr-139. An NADP(+)-binding site is contributed by Lys-143. Asn-168 lines the substrate pocket. NADP(+) is bound by residues Val-169 and Lys-177. Lys-177 (proton acceptor) is an active-site residue. Residues Arg-179, His-186, 200 to 203, Arg-213, and Tyr-292 contribute to the substrate site; that span reads FGEY.

This sequence belongs to the NAD(P)-dependent epimerase/dehydratase family. HldD subfamily. Homopentamer. Requires NADP(+) as cofactor.

It catalyses the reaction ADP-D-glycero-beta-D-manno-heptose = ADP-L-glycero-beta-D-manno-heptose. The protein operates within nucleotide-sugar biosynthesis; ADP-L-glycero-beta-D-manno-heptose biosynthesis; ADP-L-glycero-beta-D-manno-heptose from D-glycero-beta-D-manno-heptose 7-phosphate: step 4/4. Its function is as follows. Catalyzes the interconversion between ADP-D-glycero-beta-D-manno-heptose and ADP-L-glycero-beta-D-manno-heptose via an epimerization at carbon 6 of the heptose. The chain is ADP-L-glycero-D-manno-heptose-6-epimerase from Burkholderia vietnamiensis (strain G4 / LMG 22486) (Burkholderia cepacia (strain R1808)).